A 157-amino-acid chain; its full sequence is Probable succinate transporter subunit YjjB (157 aa).

The next 4 helical transmembrane spans lie at 8–28 (LALAQDMILAAIPAVGFAMVF), 50–70 (MILMTSGLNIEWSTFMASMLG), 87–107 (VFTVAAVIPMFPGISAYTAMI), and 129–149 (FLTASSIVGALSIGLSIPGLW).

The protein belongs to the ThrE exporter (TC 2.A.79) family. In terms of assembly, the transporter is composed of YjjB and YjjP.

The protein localises to the cell inner membrane. Functionally, involved in succinate export with YjjP. Both proteins are required for export. The chain is Probable succinate transporter subunit YjjB from Escherichia coli O157:H7 (strain EC4115 / EHEC).